The primary structure comprises 167 residues: Large ribosomal subunit protein bL9 (167 aa).

This sequence belongs to the bacterial ribosomal protein bL9 family.

Functionally, binds to the 23S rRNA. The polypeptide is Large ribosomal subunit protein bL9 (Nitratidesulfovibrio vulgaris (strain ATCC 29579 / DSM 644 / CCUG 34227 / NCIMB 8303 / VKM B-1760 / Hildenborough) (Desulfovibrio vulgaris)).